The sequence spans 492 residues: Protein nucleotidyltransferase YdiU (492 aa).

ATP contacts are provided by Gly94, Gly96, Arg97, Lys117, Asp129, Gly130, Arg180, and Arg187. Residue Asp257 is the Proton acceptor of the active site. Mg(2+)-binding residues include Asn258 and Asp267. Asp267 is a binding site for ATP.

Belongs to the SELO family. Requires Mg(2+) as cofactor. Mn(2+) is required as a cofactor.

It catalyses the reaction L-seryl-[protein] + ATP = 3-O-(5'-adenylyl)-L-seryl-[protein] + diphosphate. The enzyme catalyses L-threonyl-[protein] + ATP = 3-O-(5'-adenylyl)-L-threonyl-[protein] + diphosphate. The catalysed reaction is L-tyrosyl-[protein] + ATP = O-(5'-adenylyl)-L-tyrosyl-[protein] + diphosphate. It carries out the reaction L-histidyl-[protein] + UTP = N(tele)-(5'-uridylyl)-L-histidyl-[protein] + diphosphate. It catalyses the reaction L-seryl-[protein] + UTP = O-(5'-uridylyl)-L-seryl-[protein] + diphosphate. The enzyme catalyses L-tyrosyl-[protein] + UTP = O-(5'-uridylyl)-L-tyrosyl-[protein] + diphosphate. In terms of biological role, nucleotidyltransferase involved in the post-translational modification of proteins. It can catalyze the addition of adenosine monophosphate (AMP) or uridine monophosphate (UMP) to a protein, resulting in modifications known as AMPylation and UMPylation. This chain is Protein nucleotidyltransferase YdiU, found in Halalkalibacterium halodurans (strain ATCC BAA-125 / DSM 18197 / FERM 7344 / JCM 9153 / C-125) (Bacillus halodurans).